A 1188-amino-acid chain; its full sequence is DNA-directed RNA polymerase subunit beta (1188 aa).

The protein belongs to the RNA polymerase beta chain family. As to quaternary structure, the RNAP catalytic core consists of 2 alpha, 1 beta, 1 beta' and 1 omega subunit. When a sigma factor is associated with the core the holoenzyme is formed, which can initiate transcription.

The catalysed reaction is RNA(n) + a ribonucleoside 5'-triphosphate = RNA(n+1) + diphosphate. In terms of biological role, DNA-dependent RNA polymerase catalyzes the transcription of DNA into RNA using the four ribonucleoside triphosphates as substrates. This Streptococcus equi subsp. zooepidemicus (strain H70) protein is DNA-directed RNA polymerase subunit beta.